A 352-amino-acid polypeptide reads, in one-letter code: Ferredoxin--NADP reductase 2 (352 aa).

Positions 36, 44, 48, 88, 123, 290, and 331 each coordinate FAD.

This sequence belongs to the ferredoxin--NADP reductase type 2 family. As to quaternary structure, homodimer. Requires FAD as cofactor.

It carries out the reaction 2 reduced [2Fe-2S]-[ferredoxin] + NADP(+) + H(+) = 2 oxidized [2Fe-2S]-[ferredoxin] + NADPH. The chain is Ferredoxin--NADP reductase 2 from Exiguobacterium sibiricum (strain DSM 17290 / CCUG 55495 / CIP 109462 / JCM 13490 / 255-15).